The chain runs to 960 residues: RNA polymerase II subunit A C-terminal domain phosphatase (960 aa).

M1 is subject to N-acetylmethionine. Residues 178–341 (HRNRKLVLMV…PPAARETQAR (164 aa)) enclose the FCP1 homology domain. The tract at residues 331–580 (APPAARETQA…EEDTDDDDHL (250 aa)) is disordered. A compositionally biased stretch (polar residues) spans 439-448 (PGVQPTQGDA). Over residues 453–463 (LDFDLSSDSES) the composition is skewed to acidic residues. S530 is modified (phosphoserine). Residues 547–556 (ESQNSEQSGV) are compositionally biased toward polar residues. Over residues 566–578 (VGEEEEEDTDDDD) the composition is skewed to acidic residues. A BRCT domain is found at 619–718 (LKSKVLADVA…DKVEEQLFPL (100 aa)). 2 positions are modified to phosphoserine: S664 and S730. Position 770 is an N6-acetyllysine (K770). 2 disordered regions span residues 770-834 (KLIR…MSEA) and 854-948 (DILG…ADEM). Phosphoserine occurs at positions 830, 860, and 863. A compositionally biased stretch (acidic residues) spans 854-864 (DILGEGSDDSD). The segment covering 865–881 (IEKKKPEDQDNEQERAP) has biased composition (basic and acidic residues). The segment covering 934–947 (SNDDEEGSSSEADE) has biased composition (acidic residues).

As to quaternary structure, homodimer. Interacts with GTF2F1. Interacts with WDR77, SNRPB and SNRNP70. In terms of processing, phosphorylated. In the presence of TFIIF, the phosphorylated form has an increased CTD phosphatase activity. The phosphorylation is required for the physical interaction with GTF2F1.

Its subcellular location is the nucleus. The protein localises to the cytoplasm. It localises to the cytoskeleton. The protein resides in the microtubule organizing center. It is found in the centrosome. Its subcellular location is the spindle. The protein localises to the spindle pole. It localises to the midbody. It catalyses the reaction O-phospho-L-seryl-[protein] + H2O = L-seryl-[protein] + phosphate. It carries out the reaction O-phospho-L-threonyl-[protein] + H2O = L-threonyl-[protein] + phosphate. Functionally, processively dephosphorylates 'Ser-2' and 'Ser-5' of the heptad repeats YSPTSPS in the C-terminal domain of the largest RNA polymerase II subunit. This promotes the activity of RNA polymerase II. Plays a role in the exit from mitosis by dephosphorylating crucial mitotic substrates (USP44, CDC20 and WEE1) that are required for M-phase-promoting factor (MPF)/CDK1 inactivation. The chain is RNA polymerase II subunit A C-terminal domain phosphatase (Ctdp1) from Mus musculus (Mouse).